The chain runs to 356 residues: MAPMGIRLSPLGVAVFFLLGLGVLYHLYSGFLAGRFSLFGLGGEPAGGAAEVAVDGGTVDLREMLAVAVLAAERGGDEVRRVRESNVLHEKSKGKTREGAEDKMTSGDVLSNRKMFYLLKTAFPNVQINTEEHVDASDKEVIVWNRKIPEDILKEIAAPKEVPAESVTVWIDPLDATQEYTEDLRKYVTTMVCVAVNGKPVLGVIHKPFSEYTAWAMVDSGSNVKARSSYNEKTPKIIVSRSHAGMVKQVALQTFGNQTLIIPAGGAGYKVLALLDVPDMTQEKADLYIHVTYIKKWDICAGNAILKALGGHMTTLSGEEISYTGSDGIEGGLLASIRMNHQALVRKLPDLEKSGH.

At methionine 1 the chain carries N-acetylmethionine. Over 1-12 (MAPMGIRLSPLG) the chain is Cytoplasmic. A helical transmembrane segment spans residues 13–33 (VAVFFLLGLGVLYHLYSGFLA). The Lumenal portion of the chain corresponds to 34 to 356 (GRFSLFGLGG…KLPDLEKSGH (323 aa)). A disordered region spans residues 82-104 (VRESNVLHEKSKGKTREGAEDKM). Aspartate 108 serves as the catalytic Proton acceptor. Mg(2+) contacts are provided by glutamate 131, aspartate 172, leucine 174, and aspartate 175. Threonine 177 (proton acceptor) is an active-site residue. The AMP site is built by serine 240 and histidine 243. The N-linked (GlcNAc...) asparagine glycan is linked to asparagine 257. AMP contacts are provided by glycine 266 and lysine 270. Residue aspartate 298 coordinates Mg(2+).

The protein belongs to the inositol monophosphatase superfamily. Mg(2+) is required as a cofactor. Contains N-linked glycan resistant to endoglycosydase H.

The protein localises to the golgi apparatus. Its subcellular location is the trans-Golgi network membrane. It catalyses the reaction adenosine 3',5'-bisphosphate + H2O = AMP + phosphate. It functions in the pathway sulfur metabolism. With respect to regulation, strongly inhibited by lithium. In terms of biological role, exhibits 3'-nucleotidase activity toward adenosine 3',5'-bisphosphate (PAP), namely hydrolyzes adenosine 3',5'-bisphosphate into adenosine 5'-monophosphate (AMP) and a phosphate. May play a role in the formation of skeletal elements derived through endochondral ossification, possibly by clearing adenosine 3',5'-bisphosphate produced by Golgi sulfotransferases during glycosaminoglycan sulfation. Has no activity toward 3'-phosphoadenosine 5'-phosphosulfate (PAPS) or inositol phosphate (IP) substrates including I(1)P, I(1,4)P2, I(1,3,4)P3, I(1,4,5)P3 and I(1,3,4,5)P4. This is Golgi-resident adenosine 3',5'-bisphosphate 3'-phosphatase (Bpnt2) from Rattus norvegicus (Rat).